A 276-amino-acid chain; its full sequence is Probable ribose-5-phosphate isomerase 3, chloroplastic (276 aa).

The transit peptide at 1–39 directs the protein to the chloroplast; sequence MASLSFVSSSHLTLRTPSIALRSTGSSPRTSVSFSVKAQ. Position 40 is an N-acetylserine (Ser40). Ser108 bears the Phosphoserine mark.

Belongs to the ribose 5-phosphate isomerase family. Post-translationally, phosphorylated by SRK2C.

It localises to the plastid. It is found in the chloroplast. It catalyses the reaction aldehydo-D-ribose 5-phosphate = D-ribulose 5-phosphate. It functions in the pathway carbohydrate degradation; pentose phosphate pathway; D-ribose 5-phosphate from D-ribulose 5-phosphate (non-oxidative stage): step 1/1. Functionally, catalyzes the reversible conversion of ribose-5-phosphate to ribulose 5-phosphate. This chain is Probable ribose-5-phosphate isomerase 3, chloroplastic (RPI3), found in Arabidopsis thaliana (Mouse-ear cress).